The following is a 262-amino-acid chain: Octanoyltransferase (262 aa).

In terms of domain architecture, BPL/LPL catalytic spans Gly60–Arg248. Substrate is bound by residues Arg99–His106, Ala179–Gly181, and Gly192–Ser194. Cys210 functions as the Acyl-thioester intermediate in the catalytic mechanism.

The protein belongs to the LipB family.

It localises to the cytoplasm. It catalyses the reaction octanoyl-[ACP] + L-lysyl-[protein] = N(6)-octanoyl-L-lysyl-[protein] + holo-[ACP] + H(+). The protein operates within protein modification; protein lipoylation via endogenous pathway; protein N(6)-(lipoyl)lysine from octanoyl-[acyl-carrier-protein]: step 1/2. Its function is as follows. Catalyzes the transfer of endogenously produced octanoic acid from octanoyl-acyl-carrier-protein onto the lipoyl domains of lipoate-dependent enzymes. Lipoyl-ACP can also act as a substrate although octanoyl-ACP is likely to be the physiological substrate. The protein is Octanoyltransferase of Sinorhizobium medicae (strain WSM419) (Ensifer medicae).